The following is a 428-amino-acid chain: Gamma-glutamyl phosphate reductase (428 aa).

It belongs to the gamma-glutamyl phosphate reductase family.

The protein localises to the cytoplasm. It carries out the reaction L-glutamate 5-semialdehyde + phosphate + NADP(+) = L-glutamyl 5-phosphate + NADPH + H(+). The protein operates within amino-acid biosynthesis; L-proline biosynthesis; L-glutamate 5-semialdehyde from L-glutamate: step 2/2. In terms of biological role, catalyzes the NADPH-dependent reduction of L-glutamate 5-phosphate into L-glutamate 5-semialdehyde and phosphate. The product spontaneously undergoes cyclization to form 1-pyrroline-5-carboxylate. In Mesorhizobium japonicum (strain LMG 29417 / CECT 9101 / MAFF 303099) (Mesorhizobium loti (strain MAFF 303099)), this protein is Gamma-glutamyl phosphate reductase.